The chain runs to 598 residues: Centrosomal protein of 70 kDa (598 aa).

Positions Asp16–Arg38 are enriched in polar residues. The segment at Asp16 to Lys43 is disordered. Coiled-coil stretches lie at residues Thr99 to Arg210 and Thr255 to Leu317. One copy of the TPR repeat lies at Asn484 to Ser517.

Directly interacts with tubulin-gamma; this interaction determines centrosomal localization.

Its subcellular location is the cytoplasm. It localises to the cytoskeleton. The protein resides in the microtubule organizing center. The protein localises to the centrosome. Functionally, plays a role in the organization of both preexisting and nascent microtubules in interphase cells. During mitosis, required for the organization and orientation of the mitotic spindle. In Rattus norvegicus (Rat), this protein is Centrosomal protein of 70 kDa (Cep70).